Consider the following 461-residue polypeptide: Bifunctional protein HldE (461 aa).

The ribokinase stretch occupies residues 1–315 (MKKILVIGDL…LILNQTHPKI (315 aa)). 191–194 (NRTE) contributes to the ATP binding site. Residue aspartate 260 is part of the active site. The cytidylyltransferase stretch occupies residues 332-461 (FTNGCFDLLH…IEKIKRTCND (130 aa)).

The protein in the N-terminal section; belongs to the carbohydrate kinase PfkB family. It in the C-terminal section; belongs to the cytidylyltransferase family. In terms of assembly, homodimer.

It catalyses the reaction D-glycero-beta-D-manno-heptose 7-phosphate + ATP = D-glycero-beta-D-manno-heptose 1,7-bisphosphate + ADP + H(+). The catalysed reaction is D-glycero-beta-D-manno-heptose 1-phosphate + ATP + H(+) = ADP-D-glycero-beta-D-manno-heptose + diphosphate. It functions in the pathway nucleotide-sugar biosynthesis; ADP-L-glycero-beta-D-manno-heptose biosynthesis; ADP-L-glycero-beta-D-manno-heptose from D-glycero-beta-D-manno-heptose 7-phosphate: step 1/4. Its pathway is nucleotide-sugar biosynthesis; ADP-L-glycero-beta-D-manno-heptose biosynthesis; ADP-L-glycero-beta-D-manno-heptose from D-glycero-beta-D-manno-heptose 7-phosphate: step 3/4. It participates in bacterial outer membrane biogenesis; LPS core biosynthesis. Functionally, catalyzes the phosphorylation of D-glycero-D-manno-heptose 7-phosphate at the C-1 position to selectively form D-glycero-beta-D-manno-heptose-1,7-bisphosphate. Catalyzes the ADP transfer from ATP to D-glycero-beta-D-manno-heptose 1-phosphate, yielding ADP-D-glycero-beta-D-manno-heptose. This is Bifunctional protein HldE from Helicobacter pylori (strain ATCC 700392 / 26695) (Campylobacter pylori).